The following is a 341-amino-acid chain: Spore photoproduct lyase (341 aa).

A Radical SAM core domain is found at 76 to 304 (SKPSAEYAIP…ESKRKYKWGR (229 aa)). The [4Fe-4S] cluster site is built by Cys-90, Cys-94, and Cys-97. Positions 217–234 (QAARKVAGAGYKLGFVVA) form a DNA-binding region, H-T-H motif.

Belongs to the radical SAM superfamily. SPL family. In terms of assembly, monomer or homodimer. It depends on [4Fe-4S] cluster as a cofactor. The cofactor is S-adenosyl-L-methionine.

It carries out the reaction (5R)-5,6-dihydro-5-(thymidin-7-yl)thymidine in DNA = a thymidine dimer in DNA. Its function is as follows. Involved in repair of UV radiation-induced DNA damage during spore germination. Can repair thymine dimer 5-thyminyl-5,6-dihydrothymine (known as spore photoproduct (SP)) by in situ monomerization of SP to two thymines. This is Spore photoproduct lyase (splG) from Geobacillus sp. (strain Y412MC61).